The chain runs to 144 residues: Transcriptional regulator MraZ (144 aa).

2 consecutive SpoVT-AbrB domains span residues 4–47 (EYKN…TADK) and 77–120 (AQEI…DLKQ).

Belongs to the MraZ family. In terms of assembly, forms oligomers.

The protein localises to the cytoplasm. It localises to the nucleoid. The sequence is that of Transcriptional regulator MraZ from Treponema denticola (strain ATCC 35405 / DSM 14222 / CIP 103919 / JCM 8153 / KCTC 15104).